A 166-amino-acid polypeptide reads, in one-letter code: Small ribosomal subunit protein uS9 (166 aa).

The segment at 135–166 is disordered; that stretch reads KKAGFLTRDPRATERKKYGLKKARKAPQYSKR. Positions 142–151 are enriched in basic and acidic residues; sequence RDPRATERKK. Residues 152-166 are compositionally biased toward basic residues; that stretch reads YGLKKARKAPQYSKR.

It belongs to the universal ribosomal protein uS9 family.

The polypeptide is Small ribosomal subunit protein uS9 (Mycolicibacterium paratuberculosis (strain ATCC BAA-968 / K-10) (Mycobacterium paratuberculosis)).